The chain runs to 163 residues: Nucleotide-binding protein YajQ (163 aa).

It belongs to the YajQ family.

In terms of biological role, nucleotide-binding protein. The protein is Nucleotide-binding protein YajQ of Escherichia coli O127:H6 (strain E2348/69 / EPEC).